We begin with the raw amino-acid sequence, 107 residues long: Ribonuclease P protein component 4 (107 aa).

Zn(2+) is bound by residues cysteine 62, cysteine 65, cysteine 87, and cysteine 90.

Belongs to the eukaryotic/archaeal RNase P protein component 4 family. As to quaternary structure, consists of a catalytic RNA component and at least 4-5 protein subunits. Zn(2+) serves as cofactor.

The protein localises to the cytoplasm. The enzyme catalyses Endonucleolytic cleavage of RNA, removing 5'-extranucleotides from tRNA precursor.. Part of ribonuclease P, a protein complex that generates mature tRNA molecules by cleaving their 5'-ends. The protein is Ribonuclease P protein component 4 of Archaeoglobus fulgidus (strain ATCC 49558 / DSM 4304 / JCM 9628 / NBRC 100126 / VC-16).